The chain runs to 299 residues: Nicotinate-nucleotide pyrophosphorylase [carboxylating] (299 aa).

The segment at 8 to 12 (HLLPP) is important for hexamer formation. Quinolinate-binding positions include Arg-102, 138–139 (RK), 160–161 (HR), Lys-171, Glu-201, Asp-222, 248–250 (SGG), and Gly-270. Phosphothreonine is present on Thr-291.

The protein belongs to the NadC/ModD family. As to quaternary structure, hexamer formed by 3 homodimers.

The enzyme catalyses nicotinate beta-D-ribonucleotide + CO2 + diphosphate = quinolinate + 5-phospho-alpha-D-ribose 1-diphosphate + 2 H(+). The protein operates within cofactor biosynthesis; NAD(+) biosynthesis; nicotinate D-ribonucleotide from quinolinate: step 1/1. Its function is as follows. Involved in the catabolism of quinolinic acid (QA). The chain is Nicotinate-nucleotide pyrophosphorylase [carboxylating] (QPRT) from Bos taurus (Bovine).